The chain runs to 519 residues: Halolysin (519 aa).

The segment at residues 1–27 (MAGTPNFDRRSFLRLAAAAGLTGMAGV) is a signal peptide (tat-type signal). The propeptide occupies 28-116 (TSATPGRSPG…AEKNATHEAL (89 aa)). A Peptidase S8 domain is found at 127-400 (QYAPQQVNAD…SGRVDAANAV (274 aa)). Active-site charge relay system residues include aspartate 154, histidine 193, and serine 347. Residues 386-425 (STKQGSGRVDAANAVTTDPGDGGGGGGGGSKETTYDGTLS) form a disordered region. A compositionally biased stretch (gly residues) spans 405–415 (GDGGGGGGGGS).

It belongs to the peptidase S8 family. In terms of processing, predicted to be exported by the Tat system. The position of the signal peptide cleavage has not been experimentally proven.

The protein resides in the secreted. Probable secreted halophilic serine protease showing proteolytic activity toward the protease general substrate azocasein. The sequence is that of Halolysin (hly) from Haloferax mediterranei (strain ATCC 33500 / DSM 1411 / JCM 8866 / NBRC 14739 / NCIMB 2177 / R-4) (Halobacterium mediterranei).